The primary structure comprises 969 residues: Proprotein convertase subtilisin/kexin type 6 (969 aa).

Residues 1 to 16 (MPPRAPPAPGPRPPPR) show a composition bias toward pro residues. The interval 1–39 (MPPRAPPAPGPRPPPRAAAATDTAAGAGGAGGAGGAGGP) is disordered. Positions 1 to 63 (MPPRAPPAPG…LLALPAACSA (63 aa)) are cleaved as a signal peptide. Positions 26 to 39 (GAGGAGGAGGAGGP) are enriched in gly residues. Residues 64–149 (PPPRPVYTNH…QQEVKRRVKR (86 aa)) constitute a propeptide that is removed on maturation. Positions 168-487 (MWYLHCGDKN…FGLVDAEALV (320 aa)) constitute a Peptidase S8 domain. Residues D205 and H246 each act as charge relay system in the active site. An N-linked (GlcNAc...) asparagine glycan is attached at N259. S420 serves as the catalytic Charge relay system. One can recognise a P/Homo B domain in the interval 495-635 (AVPSQHMCVA…SLILYGTAEH (141 aa)). A Cell attachment site motif is present at residues 553–555 (RGD). The segment at 658–683 (EPPKAALSPSQVEVPEDEEDYTAQST) is disordered. FU repeat units lie at residues 692–739 (TSVC…GYFG), 743–790 (ARRC…GFYA), 794–838 (QKNC…GTYF), 842–887 (LIRC…GFYP), and 895–943 (HKVC…ETFC). Residues 695-930 (CHPECGDKGC…GFTQLGTSCI (236 aa)) are CRM (Cys-rich motif). N-linked (GlcNAc...) asparagine glycans are attached at residues N914 and N932. A PLAC domain is found at 931 to 969 (TNHTCSNADETFCEMVKSNRLCERKLFIQFCCRTCLLAG).

This sequence belongs to the peptidase S8 family. In terms of assembly, the PACE4A-I precursor protein seems to exist in the reticulum endoplasmic as both a monomer and a dimer-sized complex whereas mature PACE4A-I exists only as a monomer, suggesting that propeptide cleavage affects its tertiary or quaternary structure. Interacts (immature form including the propeptide) with RCN3; probably involved in the maturation and the secretion of PCSK6. Ca(2+) is required as a cofactor. In terms of tissue distribution, each PACE4 isoform exhibits a unique restricted distribution. Isoform PACE4A-I is expressed in heart, brain, placenta, lung, skeletal muscle, kidney, pancreas, but at comparatively higher levels in the liver. Isoform PACE4A-II is at least expressed in placenta. Isoform PACE4B was only found in the embryonic kidney cell line from which it was isolated. Isoform PACE4C and isoform PACE4D are expressed in placenta. Isoform PACE4E-I is expressed in cerebellum, placenta and pituitary. Isoform PACE4E-II is at least present in cerebellum.

The protein resides in the secreted. The protein localises to the endoplasmic reticulum. It localises to the endomembrane system. In terms of biological role, serine endoprotease that processes various proproteins by cleavage at paired basic amino acids, recognizing the RXXX[KR]R consensus motif. Likely functions in the constitutive secretory pathway, with unique restricted distribution in both neuroendocrine and non-neuroendocrine tissues. The chain is Proprotein convertase subtilisin/kexin type 6 (PCSK6) from Homo sapiens (Human).